A 258-amino-acid chain; its full sequence is Alcohol dehydrogenase 2 (258 aa).

9–33 provides a ligand contact to NAD(+); it reads IFVGGLGFIGYEACKQLMAKNMASF. Residue S137 coordinates substrate. The active-site Proton acceptor is Y150.

The protein belongs to the short-chain dehydrogenases/reductases (SDR) family. As to quaternary structure, homodimer.

The catalysed reaction is a primary alcohol + NAD(+) = an aldehyde + NADH + H(+). It carries out the reaction a secondary alcohol + NAD(+) = a ketone + NADH + H(+). In Ceratitis rosa (Natal fruit fly), this protein is Alcohol dehydrogenase 2 (ADH2).